A 289-amino-acid polypeptide reads, in one-letter code: 3-methyl-2-oxobutanoate hydroxymethyltransferase (289 aa).

Residues D58 and D99 each contribute to the Mg(2+) site. Residues 58 to 59 (DS), D99, and K128 each bind 3-methyl-2-oxobutanoate. E130 provides a ligand contact to Mg(2+). E197 (proton acceptor) is an active-site residue.

It belongs to the PanB family. Homodecamer; pentamer of dimers. Mg(2+) serves as cofactor.

It localises to the cytoplasm. The catalysed reaction is 3-methyl-2-oxobutanoate + (6R)-5,10-methylene-5,6,7,8-tetrahydrofolate + H2O = 2-dehydropantoate + (6S)-5,6,7,8-tetrahydrofolate. Its pathway is cofactor biosynthesis; (R)-pantothenate biosynthesis; (R)-pantoate from 3-methyl-2-oxobutanoate: step 1/2. Its function is as follows. Catalyzes the reversible reaction in which hydroxymethyl group from 5,10-methylenetetrahydrofolate is transferred onto alpha-ketoisovalerate to form ketopantoate. This Leptothrix cholodnii (strain ATCC 51168 / LMG 8142 / SP-6) (Leptothrix discophora (strain SP-6)) protein is 3-methyl-2-oxobutanoate hydroxymethyltransferase.